The primary structure comprises 664 residues: Macrolide export ATP-binding/permease protein MacB (664 aa).

The ABC transporter domain occupies 8–245 (LELVDVHRTY…AGPSVPLTLD (238 aa)). ATP is bound at residue 44–51 (GSSGSGKS). Transmembrane regions (helical) follow at residues 283 to 303 (LLSV…MALG), 543 to 563 (GAIA…IMLV), 602 to 622 (IIGI…AGWA), and 627 to 647 (IVSI…FGLW).

It belongs to the ABC transporter superfamily. Macrolide exporter (TC 3.A.1.122) family. As to quaternary structure, homodimer.

Its subcellular location is the cell inner membrane. Its function is as follows. Non-canonical ABC transporter that contains transmembrane domains (TMD), which form a pore in the inner membrane, and an ATP-binding domain (NBD), which is responsible for energy generation. Confers resistance against macrolides. In Chlorobium luteolum (strain DSM 273 / BCRC 81028 / 2530) (Pelodictyon luteolum), this protein is Macrolide export ATP-binding/permease protein MacB.